We begin with the raw amino-acid sequence, 440 residues long: MARPIVAVVGRPNVGKSTLFNKIAGERISIVENKPGVTRDRIYAEAEWLNYQFTLIDTGGIEPESEEIIPAQMRRQAELAMETANVIIFVVDGREGLTSVDRDVAELLRKTKKPVIVTLNKVDTRHQSEHFYEFYELGMGDPIEISASLGLGIGDLLDEVVKNFNPEDYNQYDDDVIKVAMIGKPNVGKSSLINRILGEERVIVSDIAGTTRDAIDTPFTDGDDRYVLIDTAGIRRKSRITESIEKYSIVRAIAAVEKSDVCLLVIDASEGVTEQDKKIAGYSHENGKGMVIVVNKWDIIEKDNHTMNEFIKEIRNELTYISYAPIVFVSALTGQRMNKILEEVKHVSNQNAMRIPTGALNEVIGEAILLNQAPSDKGKRLKVFYATQASVKPPTFILFINDKELMHFSYLRYLENKIRENFGFEGTPIRFILREKTGRD.

EngA-type G domains lie at 4–168 and 177–352; these read PIVA…NPED and IKVA…NQNA. GTP is bound by residues 10–17, 57–61, 120–123, 183–190, 230–234, and 295–298; these read GRPNVGKS, DTGGI, NKVD, GKPNVGKS, DTAGI, and NKWD. The KH-like domain maps to 353–437; that stretch reads MRIPTGALNE…PIRFILREKT (85 aa).

The protein belongs to the TRAFAC class TrmE-Era-EngA-EngB-Septin-like GTPase superfamily. EngA (Der) GTPase family. Associates with the 50S ribosomal subunit.

Its function is as follows. GTPase that plays an essential role in the late steps of ribosome biogenesis. This chain is GTPase Der, found in Alkaliphilus oremlandii (strain OhILAs) (Clostridium oremlandii (strain OhILAs)).